The sequence spans 304 residues: Acetaldehyde dehydrogenase 2 (304 aa).

Cys-131 (acyl-thioester intermediate) is an active-site residue. Residues 162–170 (SAGPGTRKN) and Asn-273 each bind NAD(+).

This sequence belongs to the acetaldehyde dehydrogenase family.

It catalyses the reaction acetaldehyde + NAD(+) + CoA = acetyl-CoA + NADH + H(+). The protein is Acetaldehyde dehydrogenase 2 of Dechloromonas aromatica (strain RCB).